The sequence spans 531 residues: Tryptophan 6-halogenase ThaL (531 aa).

FAD-binding residues include glycine 13, threonine 15, alanine 16, alanine 39, isoleucine 42, isoleucine 45, valine 47, and alanine 50. Lysine 79 is a catalytic residue. Residue proline 111 coordinates L-tryptophan. Methionine 198 and leucine 349 together coordinate FAD. Serine 360 and glycine 361 together coordinate chloride. FAD is bound at residue isoleucine 362. Tyrosine 454, tyrosine 455, glutamate 461, and phenylalanine 465 together coordinate L-tryptophan.

It belongs to the flavin-dependent halogenase family. Bacterial tryptophan halogenase subfamily. As to quaternary structure, homodimer. Monomer in solution.

The catalysed reaction is L-tryptophan + FADH2 + chloride + O2 = 6-chloro-L-tryptophan + FAD + 2 H2O. It carries out the reaction D-tryptophan + FADH2 + chloride + O2 = 6-chloro-D-tryptophan + FAD + 2 H2O. Functionally, involved in the biosynthesis of thienodolin, a plant growth-regulating compound. Catalyzes the chlorination of tryptophan (Trp) at C6 position to yield 6-chloro-tryptophan. It is also able to use bromide ions to generate monobrominated Trp. In vitro, accepts a wide range of amides and peptides carrying either L- or D-Trp at the N-terminus. This Streptomyces albogriseolus protein is Tryptophan 6-halogenase ThaL.